The sequence spans 164 residues: Large ribosomal subunit protein uL10 (164 aa).

This sequence belongs to the universal ribosomal protein uL10 family. Part of the ribosomal stalk of the 50S ribosomal subunit. The N-terminus interacts with L11 and the large rRNA to form the base of the stalk. The C-terminus forms an elongated spine to which L12 dimers bind in a sequential fashion forming a multimeric L10(L12)X complex.

Functionally, forms part of the ribosomal stalk, playing a central role in the interaction of the ribosome with GTP-bound translation factors. In Aliivibrio fischeri (strain MJ11) (Vibrio fischeri), this protein is Large ribosomal subunit protein uL10.